The primary structure comprises 213 residues: Phosphoribosylformylglycinamidine synthase subunit PurQ (213 aa).

In terms of domain architecture, Glutamine amidotransferase type-1 spans 5-213 (ACVVVYPGSN…FQSILNYLKR (209 aa)). The Nucleophile role is filled by Cys86. Residues His186 and Glu188 contribute to the active site.

In terms of assembly, part of the FGAM synthase complex composed of 1 PurL, 1 PurQ and 2 PurS subunits.

It localises to the cytoplasm. The enzyme catalyses N(2)-formyl-N(1)-(5-phospho-beta-D-ribosyl)glycinamide + L-glutamine + ATP + H2O = 2-formamido-N(1)-(5-O-phospho-beta-D-ribosyl)acetamidine + L-glutamate + ADP + phosphate + H(+). The catalysed reaction is L-glutamine + H2O = L-glutamate + NH4(+). It participates in purine metabolism; IMP biosynthesis via de novo pathway; 5-amino-1-(5-phospho-D-ribosyl)imidazole from N(2)-formyl-N(1)-(5-phospho-D-ribosyl)glycinamide: step 1/2. In terms of biological role, part of the phosphoribosylformylglycinamidine synthase complex involved in the purines biosynthetic pathway. Catalyzes the ATP-dependent conversion of formylglycinamide ribonucleotide (FGAR) and glutamine to yield formylglycinamidine ribonucleotide (FGAM) and glutamate. The FGAM synthase complex is composed of three subunits. PurQ produces an ammonia molecule by converting glutamine to glutamate. PurL transfers the ammonia molecule to FGAR to form FGAM in an ATP-dependent manner. PurS interacts with PurQ and PurL and is thought to assist in the transfer of the ammonia molecule from PurQ to PurL. The polypeptide is Phosphoribosylformylglycinamidine synthase subunit PurQ (Thermotoga maritima (strain ATCC 43589 / DSM 3109 / JCM 10099 / NBRC 100826 / MSB8)).